The sequence spans 386 residues: MAEIPTSSNPSDDPETQKLNGNEEDYDHHHDEDPESDDENYEYALQIAEMLPFPMVMQTAIELDLLGIIATAGPDRQLSAAEIAAALPAAGNPDAPAMLDRMLYLLATYSVVTCTAVDGGASGGVVRKYGLAPVAKYFVSNEDGVSLGALISLNQGQAFLASWSKLKEAVLEGGIPFNKVHGMDVFHYQGTDPRFNKIFNKAMYGQSTYIIKKIVRRYKGFENIQRLVDVGGGLGHTLRVITSNYPSIKGINFDLPHVIQHAPTIPGVEHVGGDMFESIPNGDAIFMKCILHDWSDEHCLKTLKNCYKALPRKGKVIVVQMNMIEEPQTTPLAKAISQLDVCLMTQSPGGKERTRREFQTLAEAAGFAEFNPVCHVAGFWVMEFLK.

Positions 207, 231, 254, 274, and 288 each coordinate S-adenosyl-L-homocysteine. Position 254 (Asp254) interacts with S-adenosyl-L-methionine. The Proton acceptor role is filled by His292.

This sequence belongs to the class I-like SAM-binding methyltransferase superfamily. Cation-independent O-methyltransferase family. Homodimer. Expressed at high levels in all tissues.

The catalysed reaction is 4-hydroxy-3,5-dimethoxyphenethylamine + S-adenosyl-L-methionine = mescaline + S-adenosyl-L-homocysteine + H(+). It catalyses the reaction dopamine + S-adenosyl-L-methionine = 4-methoxytyramine + S-adenosyl-L-homocysteine + H(+). The protein operates within aromatic compound metabolism. Its pathway is alkaloid biosynthesis. Functionally, O-methyltransferase participating in the biosynthesis of natural products derived from phenylethylamine, including mescaline, a natural hallucinogen potentially used in psychotherapeutic treatments. Catalyzes the O-methylation of dopamine, 4-hydroxy-3,5-dimethoxyphenethylamine, 4,5-dihydroxy-3-methoxyphenethylamine and N-methyl-4,5-dihydroxy-3-methoxyphenethylamine. Also involved in the conversion of N-methyl-4-hydroxy-3,5-dimethoxyphenethylamine to N-methylmescaline. This chain is O-methyltransferase 12, found in Lophophora williamsii (Peyote).